Reading from the N-terminus, the 119-residue chain is Holo-[acyl-carrier-protein] synthase (119 aa).

Residues Asp-6 and Glu-51 each coordinate Mg(2+).

This sequence belongs to the P-Pant transferase superfamily. AcpS family. Requires Mg(2+) as cofactor.

The protein resides in the cytoplasm. The catalysed reaction is apo-[ACP] + CoA = holo-[ACP] + adenosine 3',5'-bisphosphate + H(+). Its function is as follows. Transfers the 4'-phosphopantetheine moiety from coenzyme A to a Ser of acyl-carrier-protein. This is Holo-[acyl-carrier-protein] synthase from Sulfurovum sp. (strain NBC37-1).